A 216-amino-acid polypeptide reads, in one-letter code: 3-isopropylmalate dehydratase small subunit (216 aa).

It belongs to the LeuD family. LeuD type 1 subfamily. In terms of assembly, heterodimer of LeuC and LeuD.

The catalysed reaction is (2R,3S)-3-isopropylmalate = (2S)-2-isopropylmalate. The protein operates within amino-acid biosynthesis; L-leucine biosynthesis; L-leucine from 3-methyl-2-oxobutanoate: step 2/4. In terms of biological role, catalyzes the isomerization between 2-isopropylmalate and 3-isopropylmalate, via the formation of 2-isopropylmaleate. The chain is 3-isopropylmalate dehydratase small subunit from Cupriavidus pinatubonensis (strain JMP 134 / LMG 1197) (Cupriavidus necator (strain JMP 134)).